We begin with the raw amino-acid sequence, 303 residues long: Pseudouridine-5'-phosphate glycosidase (303 aa).

E26 functions as the Proton donor in the catalytic mechanism. Positions 87 and 107 each coordinate substrate. Mn(2+) is bound at residue D139. 141-143 (SAD) provides a ligand contact to substrate. K160 acts as the Nucleophile in catalysis.

The protein belongs to the pseudouridine-5'-phosphate glycosidase family. As to quaternary structure, homotrimer. Requires Mn(2+) as cofactor.

The catalysed reaction is D-ribose 5-phosphate + uracil = psi-UMP + H2O. Catalyzes the reversible cleavage of pseudouridine 5'-phosphate (PsiMP) to ribose 5-phosphate and uracil. Functions biologically in the cleavage direction, as part of a pseudouridine degradation pathway. This chain is Pseudouridine-5'-phosphate glycosidase, found in Saccharopolyspora erythraea (strain ATCC 11635 / DSM 40517 / JCM 4748 / NBRC 13426 / NCIMB 8594 / NRRL 2338).